The primary structure comprises 232 residues: Orotidine 5'-phosphate decarboxylase (232 aa).

Residues aspartate 11, lysine 33, aspartate 60–threonine 69, threonine 119, arginine 180, glutamine 189, glycine 209, and arginine 210 each bind substrate. Lysine 62 serves as the catalytic Proton donor.

Belongs to the OMP decarboxylase family. Type 1 subfamily. As to quaternary structure, homodimer.

It catalyses the reaction orotidine 5'-phosphate + H(+) = UMP + CO2. Its pathway is pyrimidine metabolism; UMP biosynthesis via de novo pathway; UMP from orotate: step 2/2. Catalyzes the decarboxylation of orotidine 5'-monophosphate (OMP) to uridine 5'-monophosphate (UMP). This is Orotidine 5'-phosphate decarboxylase from Wigglesworthia glossinidia brevipalpis.